The primary structure comprises 184 residues: Cathelicidin-related peptide Pt_CRAMP2 (184 aa).

The first 22 residues, 1–22 (MDGFFWKTWLVVAALAIGGTSS), serve as a signal peptide directing secretion. A propeptide spanning residues 23-150 (LPHKPLTYEE…EDEKDQPRRV (128 aa)) is cleaved from the precursor. Intrachain disulfides connect Cys-81–Cys-92 and Cys-103–Cys-120. A compositionally biased stretch (acidic residues) spans 125-144 (EDEEQNQEEEEEEEKEEDEK). The segment at 125–147 (EDEEQNQEEEEEEEKEEDEKDQP) is disordered.

Belongs to the cathelicidin family. In terms of tissue distribution, expressed by the venom gland.

It localises to the secreted. The protein localises to the target cell membrane. Functionally, potent antimicrobial peptide against most of Gram-negative bacteria, some Gram-positive bacteria (Bacillus) and some fungi (C.albicans, P.pastoris, A.terreus, A.nidulans, and C.globosum). Adopts an amphipathic alpha helical conformation, that may allow to partition into the target membrane. No hemolytic and cytotoxic activities have been observed on mammalian cells. This Pseudonaja textilis (Eastern brown snake) protein is Cathelicidin-related peptide Pt_CRAMP2.